Here is a 610-residue protein sequence, read N- to C-terminus: Putative protein tag-250 (610 aa).

Tudor domains follow at residues 149–260 (VALK…LLPP) and 386–506 (MPMS…KIGG).

The protein is Putative protein tag-250 (tag-250) of Caenorhabditis elegans.